We begin with the raw amino-acid sequence, 78 residues long: Large ribosomal subunit protein bL28 (78 aa).

It belongs to the bacterial ribosomal protein bL28 family.

This Escherichia coli O139:H28 (strain E24377A / ETEC) protein is Large ribosomal subunit protein bL28.